We begin with the raw amino-acid sequence, 171 residues long: AN1-type zinc finger protein 2A (171 aa).

2 AN1-type zinc fingers span residues 4–52 and 94–142; these read PDLG…KKDV and KVFT…SSAS. Positions 10, 15, 25, 28, 33, 36, 42, 44, 100, 105, 115, 118, 123, 126, 132, and 134 each coordinate Zn(2+). The interval 134–171 is disordered; the sequence is CQAGSSSASRGRTSTSRAAEQKPSGVSWLAQRLRRTVK. The span at 136 to 151 shows a compositional bias: low complexity; the sequence is AGSSSASRGRTSTSRA.

It localises to the cytoplasm. It is found in the nucleus. The protein is AN1-type zinc finger protein 2A (Zfand2a) of Mus musculus (Mouse).